A 446-amino-acid polypeptide reads, in one-letter code: Exodeoxyribonuclease 7 large subunit (446 aa).

This sequence belongs to the XseA family. As to quaternary structure, heterooligomer composed of large and small subunits.

It is found in the cytoplasm. It carries out the reaction Exonucleolytic cleavage in either 5'- to 3'- or 3'- to 5'-direction to yield nucleoside 5'-phosphates.. Functionally, bidirectionally degrades single-stranded DNA into large acid-insoluble oligonucleotides, which are then degraded further into small acid-soluble oligonucleotides. The chain is Exodeoxyribonuclease 7 large subunit from Shewanella denitrificans (strain OS217 / ATCC BAA-1090 / DSM 15013).